A 175-amino-acid chain; its full sequence is uncharacterized protein (175 aa).

Disordered stretches follow at residues 68 to 112 (NKNN…DQPY) and 153 to 175 (PEKAKRDDSDDEDSMFPIKKLTT). The span at 94–105 (DEQPMMPYQQPP) shows a compositional bias: low complexity.

This sequence belongs to the asfivirus H171R family.

The protein localises to the virion. This is an uncharacterized protein from African swine fever virus (isolate Tick/Malawi/Lil 20-1/1983) (ASFV).